The chain runs to 435 residues: Xylose isomerase (435 aa).

Active-site residues include histidine 99 and aspartate 102. Mg(2+)-binding residues include glutamate 230, glutamate 266, histidine 269, aspartate 294, aspartate 305, aspartate 307, and aspartate 337.

The protein belongs to the xylose isomerase family. Homotetramer. Mg(2+) serves as cofactor.

It is found in the cytoplasm. The catalysed reaction is alpha-D-xylose = alpha-D-xylulofuranose. The sequence is that of Xylose isomerase (xylA) from Tetragenococcus halophilus (Pediococcus halophilus).